The following is a 604-amino-acid chain: Transcriptional repressor rco-1 (604 aa).

Disordered regions lie at residues 87-110 and 124-264; these read RGGA…PAIG and GGQA…DRLP. A compositionally biased stretch (pro residues) spans 144 to 163; it reads MPAPPGLQGPPPPPPPPSQQ. Low complexity-rich tracts occupy residues 164 to 177 and 190 to 209; these read PPFQ…QGPG and PGPA…PATP. The segment covering 210–229 has biased composition (polar residues); that stretch reads QINTPIPYNGGPAQSPQVPT. 7 WD repeats span residues 295–324, 342–372, 384–414, 425–455, 469–499, 523–553, and 565–600; these read QHES…QIYD, TGDL…RVWD, GHEQ…RLWD, SIED…RVWD, GHKD…KMWE, GHRD…QFWD, and GHKN…RIWS.

Represses transcription by RNA polymerase II. May be involved at several stages of conidiation and other growth and development processes. Appears to regulate genes that are expressed in asexual and sexual spore pathways. In Neurospora crassa (strain ATCC 24698 / 74-OR23-1A / CBS 708.71 / DSM 1257 / FGSC 987), this protein is Transcriptional repressor rco-1 (rco-1).